A 442-amino-acid polypeptide reads, in one-letter code: Trigger factor (442 aa).

The region spanning 165-250 is the PPIase FKBP-type domain; the sequence is DDRVIIDFEG…LQKVMAPELP (86 aa).

This sequence belongs to the FKBP-type PPIase family. Tig subfamily.

The protein localises to the cytoplasm. It carries out the reaction [protein]-peptidylproline (omega=180) = [protein]-peptidylproline (omega=0). Its function is as follows. Involved in protein export. Acts as a chaperone by maintaining the newly synthesized protein in an open conformation. Functions as a peptidyl-prolyl cis-trans isomerase. This chain is Trigger factor, found in Coxiella burnetii (strain RSA 493 / Nine Mile phase I).